The primary structure comprises 787 residues: Signal transducer and activator of transcription 5B (787 aa).

Tyr90 is subject to Phosphotyrosine. A phosphoserine mark is found at Ser128 and Ser193. Positions 232–321 (KHQKTLQLLR…MLAEVNATIT (90 aa)) are required for interaction with NMI. One can recognise an SH2 domain in the interval 589-686 (WNDGAILGFV…EVYSKYYTPV (98 aa)). Position 682 is a phosphotyrosine (Tyr682). Tyr699 is subject to Phosphotyrosine; by HCK, JAK and PTK6.

This sequence belongs to the transcription factor STAT family. In terms of assembly, upon activation, forms homodimers. Forms also heterodimers with related family members. Binds NR3C1. Interacts with NCOA1. Interacts with NMI. Interacts with SOCS7. Interacts (via SH2 domain) with INSR. Interacts with CPEB3; this inhibits STAT5B-mediated transcriptional activation. Tyrosine phosphorylated in response to signaling via activated KIT, resulting in translocation to the nucleus. Tyrosine phosphorylated in response to signaling via activated FLT3; wild-type FLT3 results in much weaker phosphorylation than constitutively activated mutant FLT3. Alternatively, can be phosphorylated by JAK2. Phosphorylation at Tyr-699 by PTK6 or HCK leads to an increase of its transcriptional activity.

The protein resides in the cytoplasm. Its subcellular location is the nucleus. In terms of biological role, carries out a dual function: signal transduction and activation of transcription. Mediates cellular responses to the cytokine KITLG/SCF and other growth factors. Binds to the GAS element and activates PRL-induced transcription. Positively regulates hematopoietic/erythroid differentiation. This chain is Signal transducer and activator of transcription 5B (STAT5B), found in Homo sapiens (Human).